Here is a 381-residue protein sequence, read N- to C-terminus: Succinyl-diaminopimelate desuccinylase (381 aa).

His-69 is a binding site for Zn(2+). The active site involves Asp-71. A Zn(2+)-binding site is contributed by Asp-103. Glu-137 acts as the Proton acceptor in catalysis. The Zn(2+) site is built by Glu-138, Glu-166, and His-355.

This sequence belongs to the peptidase M20A family. DapE subfamily. Homodimer. Zn(2+) serves as cofactor. It depends on Co(2+) as a cofactor.

The catalysed reaction is N-succinyl-(2S,6S)-2,6-diaminopimelate + H2O = (2S,6S)-2,6-diaminopimelate + succinate. Its pathway is amino-acid biosynthesis; L-lysine biosynthesis via DAP pathway; LL-2,6-diaminopimelate from (S)-tetrahydrodipicolinate (succinylase route): step 3/3. Catalyzes the hydrolysis of N-succinyl-L,L-diaminopimelic acid (SDAP), forming succinate and LL-2,6-diaminopimelate (DAP), an intermediate involved in the bacterial biosynthesis of lysine and meso-diaminopimelic acid, an essential component of bacterial cell walls. The polypeptide is Succinyl-diaminopimelate desuccinylase (Rickettsia akari (strain Hartford)).